A 185-amino-acid chain; its full sequence is Ribosome-recycling factor (185 aa).

The disordered stretch occupies residues 136–161; sequence MDSLKTDEKKGEIGEDDRKRRETEVQ.

It belongs to the RRF family.

The protein localises to the cytoplasm. Responsible for the release of ribosomes from messenger RNA at the termination of protein biosynthesis. May increase the efficiency of translation by recycling ribosomes from one round of translation to another. The protein is Ribosome-recycling factor of Rhizorhabdus wittichii (strain DSM 6014 / CCUG 31198 / JCM 15750 / NBRC 105917 / EY 4224 / RW1) (Sphingomonas wittichii).